The following is a 435-amino-acid chain: ATP-dependent protease ATPase subunit HslU (435 aa).

ATP-binding positions include valine 18, 60 to 65 (GVGKTE), aspartate 248, glutamate 313, and arginine 385.

It belongs to the ClpX chaperone family. HslU subfamily. As to quaternary structure, a double ring-shaped homohexamer of HslV is capped on each side by a ring-shaped HslU homohexamer. The assembly of the HslU/HslV complex is dependent on binding of ATP.

It localises to the cytoplasm. Functionally, ATPase subunit of a proteasome-like degradation complex; this subunit has chaperone activity. The binding of ATP and its subsequent hydrolysis by HslU are essential for unfolding of protein substrates subsequently hydrolyzed by HslV. HslU recognizes the N-terminal part of its protein substrates and unfolds these before they are guided to HslV for hydrolysis. This Xanthobacter autotrophicus (strain ATCC BAA-1158 / Py2) protein is ATP-dependent protease ATPase subunit HslU.